The chain runs to 497 residues: Guanosine-5'-triphosphate,3'-diphosphate pyrophosphatase (497 aa).

Belongs to the GppA/Ppx family. GppA subfamily.

It carries out the reaction guanosine 3'-diphosphate 5'-triphosphate + H2O = guanosine 3',5'-bis(diphosphate) + phosphate + H(+). It participates in purine metabolism; ppGpp biosynthesis; ppGpp from GTP: step 2/2. Its function is as follows. Catalyzes the conversion of pppGpp to ppGpp. Guanosine pentaphosphate (pppGpp) is a cytoplasmic signaling molecule which together with ppGpp controls the 'stringent response', an adaptive process that allows bacteria to respond to amino acid starvation, resulting in the coordinated regulation of numerous cellular activities. The chain is Guanosine-5'-triphosphate,3'-diphosphate pyrophosphatase from Vibrio parahaemolyticus serotype O3:K6 (strain RIMD 2210633).